Here is a 253-residue protein sequence, read N- to C-terminus: Probable U3 small nucleolar RNA-associated protein 11 (253 aa).

Residues 1–26 (MAAAFRKAAKSRQREHRERSQPGFRK) form a disordered region. Residues K74, K83, and K86 each participate in a glycyl lysine isopeptide (Lys-Gly) (interchain with G-Cter in SUMO2) cross-link. T90 bears the Phosphothreonine mark. Residues K103, K120, K143, K144, K180, K211, K218, K235, and K236 each participate in a glycyl lysine isopeptide (Lys-Gly) (interchain with G-Cter in SUMO2) cross-link. Phosphoserine is present on S241. Residue K246 forms a Glycyl lysine isopeptide (Lys-Gly) (interchain with G-Cter in SUMO2) linkage.

It belongs to the UTP11 family. In terms of assembly, part of the small subunit (SSU) processome, composed of more than 70 proteins and the RNA chaperone small nucleolar RNA (snoRNA) U3.

The protein localises to the nucleus. Its subcellular location is the nucleolus. Functionally, part of the small subunit (SSU) processome, first precursor of the small eukaryotic ribosomal subunit. During the assembly of the SSU processome in the nucleolus, many ribosome biogenesis factors, an RNA chaperone and ribosomal proteins associate with the nascent pre-rRNA and work in concert to generate RNA folding, modifications, rearrangements and cleavage as well as targeted degradation of pre-ribosomal RNA by the RNA exosome. Involved in nucleolar processing of pre-18S ribosomal RNA. This chain is Probable U3 small nucleolar RNA-associated protein 11, found in Homo sapiens (Human).